The following is a 129-amino-acid chain: Glycine cleavage system H protein (129 aa).

Positions 24–106 (TYTVGITEHA…YGQGWIFKIK (83 aa)) constitute a Lipoyl-binding domain. The residue at position 65 (Lys65) is an N6-lipoyllysine.

The protein belongs to the GcvH family. As to quaternary structure, the glycine cleavage system is composed of four proteins: P, T, L and H. The cofactor is (R)-lipoate.

In terms of biological role, the glycine cleavage system catalyzes the degradation of glycine. The H protein shuttles the methylamine group of glycine from the P protein to the T protein. In Cronobacter sakazakii (strain ATCC BAA-894) (Enterobacter sakazakii), this protein is Glycine cleavage system H protein.